The following is a 411-amino-acid chain: Imidazolonepropionase (411 aa).

Residues histidine 78 and histidine 80 each contribute to the Fe(3+) site. Residues histidine 78 and histidine 80 each coordinate Zn(2+). Positions 87, 150, and 183 each coordinate 4-imidazolone-5-propanoate. Tyrosine 150 serves as a coordination point for N-formimidoyl-L-glutamate. Histidine 248 is a binding site for Fe(3+). Residue histidine 248 coordinates Zn(2+). Glutamine 251 is a 4-imidazolone-5-propanoate binding site. Position 322 (aspartate 322) interacts with Fe(3+). Aspartate 322 contacts Zn(2+). N-formimidoyl-L-glutamate-binding residues include asparagine 324 and glycine 326. Serine 327 contributes to the 4-imidazolone-5-propanoate binding site.

Belongs to the metallo-dependent hydrolases superfamily. HutI family. It depends on Zn(2+) as a cofactor. Fe(3+) is required as a cofactor.

Its subcellular location is the cytoplasm. The enzyme catalyses 4-imidazolone-5-propanoate + H2O = N-formimidoyl-L-glutamate. It participates in amino-acid degradation; L-histidine degradation into L-glutamate; N-formimidoyl-L-glutamate from L-histidine: step 3/3. Catalyzes the hydrolytic cleavage of the carbon-nitrogen bond in imidazolone-5-propanoate to yield N-formimidoyl-L-glutamate. It is the third step in the universal histidine degradation pathway. The chain is Imidazolonepropionase from Christiangramia forsetii (strain DSM 17595 / CGMCC 1.15422 / KT0803) (Gramella forsetii).